Here is a 310-residue protein sequence, read N- to C-terminus: Ribosomal RNA small subunit methyltransferase H (310 aa).

Residues 32–34 (GGH), aspartate 52, phenylalanine 79, aspartate 100, and glutamine 107 each bind S-adenosyl-L-methionine.

It belongs to the methyltransferase superfamily. RsmH family.

Its subcellular location is the cytoplasm. The enzyme catalyses cytidine(1402) in 16S rRNA + S-adenosyl-L-methionine = N(4)-methylcytidine(1402) in 16S rRNA + S-adenosyl-L-homocysteine + H(+). Specifically methylates the N4 position of cytidine in position 1402 (C1402) of 16S rRNA. The polypeptide is Ribosomal RNA small subunit methyltransferase H (Bacillus mycoides (strain KBAB4) (Bacillus weihenstephanensis)).